A 131-amino-acid chain; its full sequence is Type-5 thionin (131 aa).

The signal sequence occupies residues 1–29 (MGGGQKGLESAIVCLLVLGLVLEQVQVEG). Positions 67–131 (LASVRSSDEP…GDTLLASLDD (65 aa)) are cleaved as a propeptide — acidic domain.

The protein belongs to the plant thionin (TC 1.C.44) family. In terms of processing, is disulfide-linked. Developing endosperm.

It localises to the secreted. In terms of biological role, thionins are small plant proteins which are toxic to animal cells. They seem to exert their toxic effect at the level of the cell membrane. Their precise function is not known. This chain is Type-5 thionin (TTHV), found in Triticum aestivum (Wheat).